We begin with the raw amino-acid sequence, 159 residues long: Small ribosomal subunit protein uS4 (159 aa).

In terms of domain architecture, S4 RNA-binding spans 106-158; sequence RRLQTIVYRKGLAKSIYHARQLVVHGHVAVAGRRVTSPGFLVPRDLEDKITLI.

It belongs to the universal ribosomal protein uS4 family. As to quaternary structure, part of the 30S ribosomal subunit. Contacts protein S5. The interaction surface between S4 and S5 is involved in control of translational fidelity.

One of the primary rRNA binding proteins, it binds directly to 16S rRNA where it nucleates assembly of the body of the 30S subunit. In terms of biological role, with S5 and S12 plays an important role in translational accuracy. This chain is Small ribosomal subunit protein uS4, found in Pyrobaculum islandicum (strain DSM 4184 / JCM 9189 / GEO3).